Reading from the N-terminus, the 64-residue chain is Large ribosomal subunit protein bL35c (64 aa).

Belongs to the bacterial ribosomal protein bL35 family.

The protein resides in the plastid. Its subcellular location is the chloroplast. This is Large ribosomal subunit protein bL35c from Cyanidium caldarium (Red alga).